We begin with the raw amino-acid sequence, 79 residues long: Virulence protein MsgA (79 aa).

It belongs to the DinI family.

Functionally, affects survival in macrophages. This chain is Virulence protein MsgA (msgA), found in Salmonella typhi.